Here is a 199-residue protein sequence, read N- to C-terminus: Probable GTP-binding protein EngB (199 aa).

One can recognise an EngB-type G domain in the interval 22 to 196 (NWPEFAFSGR…GKFILDLVDS (175 aa)). GTP is bound by residues 30–37 (GRSNVGKS), 57–61 (GRTQS), 75–78 (DLPG), 142–145 (TKVD), and 175–177 (FSA). Residues serine 37 and threonine 59 each coordinate Mg(2+).

It belongs to the TRAFAC class TrmE-Era-EngA-EngB-Septin-like GTPase superfamily. EngB GTPase family. Mg(2+) serves as cofactor.

In terms of biological role, necessary for normal cell division and for the maintenance of normal septation. This chain is Probable GTP-binding protein EngB, found in Halothermothrix orenii (strain H 168 / OCM 544 / DSM 9562).